Here is a 474-residue protein sequence, read N- to C-terminus: Bifunctional protein HldE (474 aa).

The ribokinase stretch occupies residues 1–318; the sequence is MKLSMPRFDQ…RAVQREQGSE (318 aa). 194 to 197 is a binding site for ATP; that stretch reads NLSE. The active site involves Asp263. The cytidylyltransferase stretch occupies residues 343-474; it reads FTNGCFDILH…AIVEKIRQKG (132 aa).

In the N-terminal section; belongs to the carbohydrate kinase PfkB family. This sequence in the C-terminal section; belongs to the cytidylyltransferase family. Homodimer.

It carries out the reaction D-glycero-beta-D-manno-heptose 7-phosphate + ATP = D-glycero-beta-D-manno-heptose 1,7-bisphosphate + ADP + H(+). It catalyses the reaction D-glycero-beta-D-manno-heptose 1-phosphate + ATP + H(+) = ADP-D-glycero-beta-D-manno-heptose + diphosphate. It participates in nucleotide-sugar biosynthesis; ADP-L-glycero-beta-D-manno-heptose biosynthesis; ADP-L-glycero-beta-D-manno-heptose from D-glycero-beta-D-manno-heptose 7-phosphate: step 1/4. It functions in the pathway nucleotide-sugar biosynthesis; ADP-L-glycero-beta-D-manno-heptose biosynthesis; ADP-L-glycero-beta-D-manno-heptose from D-glycero-beta-D-manno-heptose 7-phosphate: step 3/4. In terms of biological role, catalyzes the phosphorylation of D-glycero-D-manno-heptose 7-phosphate at the C-1 position to selectively form D-glycero-beta-D-manno-heptose-1,7-bisphosphate. Functionally, catalyzes the ADP transfer from ATP to D-glycero-beta-D-manno-heptose 1-phosphate, yielding ADP-D-glycero-beta-D-manno-heptose. The protein is Bifunctional protein HldE of Pseudomonas paraeruginosa (strain DSM 24068 / PA7) (Pseudomonas aeruginosa (strain PA7)).